Here is a 28-residue protein sequence, read N- to C-terminus: Small integral membrane protein 47 (28 aa).

The helical transmembrane segment at valine 7–asparagine 24 threads the bilayer.

It is found in the membrane. This is Small integral membrane protein 47 from Homo sapiens (Human).